We begin with the raw amino-acid sequence, 82 residues long: Cytochrome c oxidase-assembly factor cox-23, mitochondrial (82 aa).

The interval 1–27 (MAQAGSENKEPWNEETRAKFEGKSRSE) is disordered. Residues 7–27 (ENKEPWNEETRAKFEGKSRSE) are compositionally biased toward basic and acidic residues. The region spanning 29 to 71 (LDPCQEAAQRSIRCLHRNQGDRTMCSDYFEAYRECKKQWIERR) is the CHCH domain. 2 short sequence motifs (cx9C motif) span residues 32–42 (CQEAAQRSIRC) and 53–63 (CSDYFEAYREC). Intrachain disulfides connect C32–C63 and C42–C53.

Belongs to the COX23 family.

The protein resides in the mitochondrion intermembrane space. Its function is as follows. Required for the assembly of cytochrome c oxidase. The protein is Cytochrome c oxidase-assembly factor cox-23, mitochondrial (cox-23) of Neurospora crassa (strain ATCC 24698 / 74-OR23-1A / CBS 708.71 / DSM 1257 / FGSC 987).